The following is a 933-amino-acid chain: Phosphoenolpyruvate carboxylase (933 aa).

Residues H164 and K595 contribute to the active site.

This sequence belongs to the PEPCase type 1 family. The cofactor is Mg(2+).

The catalysed reaction is oxaloacetate + phosphate = phosphoenolpyruvate + hydrogencarbonate. In terms of biological role, forms oxaloacetate, a four-carbon dicarboxylic acid source for the tricarboxylic acid cycle. The protein is Phosphoenolpyruvate carboxylase of Rhodopseudomonas palustris (strain HaA2).